A 174-amino-acid polypeptide reads, in one-letter code: MNYFTLFDLPRKFNIDKKLLSQNFYKLQLKFHPDLFINDSESKKKIILEKSIQINKGYKTLKNFLNRAIYFLCLNGYEVKKETLLLKNNDFLIRYFSLYEQLDNLKENNFNKKELNNLEQIIQKKIIYCKKKIELEFEKTRYKKVIKIISELLFFEKIKDVLKKEYNIYLRQIN.

One can recognise a J domain in the interval 2-74; it reads NYFTLFDLPR…LNRAIYFLCL (73 aa).

It belongs to the HscB family. Interacts with HscA and stimulates its ATPase activity. Interacts with IscU.

Its function is as follows. Co-chaperone involved in the maturation of iron-sulfur cluster-containing proteins. Seems to help targeting proteins to be folded toward HscA. The chain is Co-chaperone protein HscB from Buchnera aphidicola subsp. Acyrthosiphon pisum (strain Tuc7).